We begin with the raw amino-acid sequence, 465 residues long: Glutamate--tRNA ligase (465 aa).

A 'HIGH' region motif is present at residues 8–18 (PSPTGDLHIGG). Residues 235–239 (RLSKR) carry the 'KMSKS' region motif. Position 238 (lysine 238) interacts with ATP.

It belongs to the class-I aminoacyl-tRNA synthetase family. Glutamate--tRNA ligase type 1 subfamily. In terms of assembly, monomer.

Its subcellular location is the cytoplasm. It catalyses the reaction tRNA(Glu) + L-glutamate + ATP = L-glutamyl-tRNA(Glu) + AMP + diphosphate. Catalyzes the attachment of glutamate to tRNA(Glu) in a two-step reaction: glutamate is first activated by ATP to form Glu-AMP and then transferred to the acceptor end of tRNA(Glu). The sequence is that of Glutamate--tRNA ligase from Dichelobacter nodosus (strain VCS1703A).